A 714-amino-acid polypeptide reads, in one-letter code: Penicillin-binding protein 1F (714 aa).

Over 1 to 12 (MFKIKKKKLFIP) the chain is Cytoplasmic. A helical; Signal-anchor for type II membrane protein membrane pass occupies residues 13–33 (IIILVLTAFLALIGYISIIFL). Residues 34–714 (GHYVIDEKKL…DYVQPKLFSS (681 aa)) are Extracellular-facing. Residues 49–217 (SKIVDQNGDE…STYSPILHPD (169 aa)) are transglycosylase. The active-site Proton donor; for transglycosylase activity is E87. The segment at 297 to 592 (SKLQKTAYQV…SSYPTRLFKD (296 aa)) is transpeptidase. Catalysis depends on S359, which acts as the Acyl-ester intermediate; for transpeptidase activity.

The protein in the N-terminal section; belongs to the glycosyltransferase 51 family. This sequence in the C-terminal section; belongs to the transpeptidase family.

Its subcellular location is the cell membrane. The catalysed reaction is [GlcNAc-(1-&gt;4)-Mur2Ac(oyl-L-Ala-gamma-D-Glu-L-Lys-D-Ala-D-Ala)](n)-di-trans,octa-cis-undecaprenyl diphosphate + beta-D-GlcNAc-(1-&gt;4)-Mur2Ac(oyl-L-Ala-gamma-D-Glu-L-Lys-D-Ala-D-Ala)-di-trans,octa-cis-undecaprenyl diphosphate = [GlcNAc-(1-&gt;4)-Mur2Ac(oyl-L-Ala-gamma-D-Glu-L-Lys-D-Ala-D-Ala)](n+1)-di-trans,octa-cis-undecaprenyl diphosphate + di-trans,octa-cis-undecaprenyl diphosphate + H(+). It carries out the reaction Preferential cleavage: (Ac)2-L-Lys-D-Ala-|-D-Ala. Also transpeptidation of peptidyl-alanyl moieties that are N-acyl substituents of D-alanine.. It functions in the pathway cell wall biogenesis; peptidoglycan biosynthesis. In terms of biological role, cell wall formation. May be involved in outgrowth of the germinated spore or it could function in the synthesis of the germ cell wall. The polypeptide is Penicillin-binding protein 1F (pbpF) (Bacillus subtilis (strain 168)).